A 106-amino-acid chain; its full sequence is Small ribosomal subunit protein uS10 (106 aa).

Belongs to the universal ribosomal protein uS10 family. In terms of assembly, part of the 30S ribosomal subunit.

Functionally, involved in the binding of tRNA to the ribosomes. The protein is Small ribosomal subunit protein uS10 of Archaeoglobus fulgidus (strain ATCC 49558 / DSM 4304 / JCM 9628 / NBRC 100126 / VC-16).